The sequence spans 186 residues: Elongation factor P (186 aa).

The protein belongs to the elongation factor P family.

The protein resides in the cytoplasm. It participates in protein biosynthesis; polypeptide chain elongation. Its function is as follows. Involved in peptide bond synthesis. Stimulates efficient translation and peptide-bond synthesis on native or reconstituted 70S ribosomes in vitro. Probably functions indirectly by altering the affinity of the ribosome for aminoacyl-tRNA, thus increasing their reactivity as acceptors for peptidyl transferase. The polypeptide is Elongation factor P (Neisseria gonorrhoeae (strain ATCC 700825 / FA 1090)).